A 96-amino-acid chain; its full sequence is Cytochrome c2 iso-2 (96 aa).

The heme c site is built by Cys10, Cys13, His14, and Met75.

Belongs to the cytochrome c family. Post-translationally, binds 1 heme c group covalently per subunit.

Its function is as follows. Cytochrome c2 is found mainly in purple, non-sulfur, photosynthetic bacteria where it functions as the electron donor to the oxidized bacteriochlorophyll in the photophosphorylation pathway. However, it may also have a role in the respiratory chain and is found in some non-photosynthetic bacteria. This chain is Cytochrome c2 iso-2, found in Magnetospirillum fulvum (Rhodospirillum fulvum).